The sequence spans 284 residues: Cysteine-rich repeat secretory protein 8 (284 aa).

The N-terminal stretch at 1-27 is a signal peptide; it reads MATFIRFTAPLFCFFFLFSLFSHQTMS. 2 consecutive Gnk2-homologous domains span residues 32–136 and 151–259; these read MATF…NVSF and SLAT…TTGL.

This sequence belongs to the cysteine-rich repeat secretory protein family.

The protein localises to the secreted. The sequence is that of Cysteine-rich repeat secretory protein 8 (CRRSP8) from Arabidopsis thaliana (Mouse-ear cress).